The following is a 1564-amino-acid chain: ATP-dependent permease PDR10 (1564 aa).

Over residues Met-1–Asn-16 the composition is skewed to polar residues. Residues Met-1–Gln-37 form a disordered region. The Cytoplasmic segment spans residues Met-1–Asn-587. The region spanning Ile-174–Glu-430 is the ABC transporter 1 domain. Helical transmembrane passes span Ala-588–His-608, Thr-624–Phe-644, Arg-674–Leu-694, Met-699–Tyr-719, and Ile-732–Tyr-752. Asn-754 is a glycosylation site (N-linked (GlcNAc...) asparagine). The segment covering Lys-839–Asn-849 has biased composition (basic residues). A disordered region spans residues Lys-839 to Asp-872. Residues Ile-841–Asp-861 traverse the membrane as a helical segment. Topologically, residues Val-862–Pro-1304 are cytoplasmic. An ABC transporter 2 domain is found at Phe-923 to Ala-1166. Gly-959–Thr-966 is an ATP binding site. 6 helical membrane-spanning segments follow: residues Ile-1305–Arg-1325, Ile-1340–Tyr-1360, Val-1390–Ala-1410, Val-1426–Leu-1446, Ala-1459–Met-1479, and Ser-1491–Phe-1511. At Ser-1512–Lys-1564 the chain is on the cytoplasmic side.

It belongs to the ABC transporter superfamily. ABCG family. PDR (TC 3.A.1.205) subfamily.

Its subcellular location is the membrane. This is ATP-dependent permease PDR10 (PDR10) from Saccharomyces cerevisiae (strain ATCC 204508 / S288c) (Baker's yeast).